Reading from the N-terminus, the 372-residue chain is Protein-glutamate methylesterase/protein-glutamine glutaminase 1 (372 aa).

The Response regulatory domain maps to 4-121 (KVLVVDDSSF…ATNKDDAILL (118 aa)). D55 carries the post-translational modification 4-aspartylphosphate. Positions 138–174 (VVRPTTPTPPPRSSASSVLGGVSTHTQPAPVRSSHAA) are disordered. One can recognise a CheB-type methylesterase domain in the interval 179 to 372 (SGKQYKLLLI…ESILKESARG (194 aa)). Residues S191, H218, and D314 contribute to the active site.

It belongs to the CheB family. Post-translationally, phosphorylated by CheA. Phosphorylation of the N-terminal regulatory domain activates the methylesterase activity.

The protein localises to the cytoplasm. The enzyme catalyses [protein]-L-glutamate 5-O-methyl ester + H2O = L-glutamyl-[protein] + methanol + H(+). The catalysed reaction is L-glutaminyl-[protein] + H2O = L-glutamyl-[protein] + NH4(+). Its function is as follows. Involved in chemotaxis. Part of a chemotaxis signal transduction system that modulates chemotaxis in response to various stimuli. Catalyzes the demethylation of specific methylglutamate residues introduced into the chemoreceptors (methyl-accepting chemotaxis proteins or MCP) by CheR. Also mediates the irreversible deamidation of specific glutamine residues to glutamic acid. This Shewanella sp. (strain MR-4) protein is Protein-glutamate methylesterase/protein-glutamine glutaminase 1.